Consider the following 127-residue polypeptide: MRERAVGSKGSFPIGIAELQEVSCASVEINQPLLLADLRSDGMLRMRIPTDAARAASHELGKQWSRALWLHDEKPDGIIYDSRLNGEANTALFDRALPKLNVKSSGPLLDFRDEVAQILDDFSLEIV.

It belongs to the MbcT/ParT/Res family.

In terms of biological role, probable toxic component of a type II toxin-antitoxin (TA) system. It is not known which gene encodes its antitoxin. In Sinorhizobium fredii (strain NBRC 101917 / NGR234), this protein is Probable toxin y4kH.